Reading from the N-terminus, the 560-residue chain is Tudor and KH domain-containing protein (560 aa).

2 consecutive KH domains span residues 52–115 (DIEI…KAAI) and 124–190 (PVFE…KHLI). Glycyl lysine isopeptide (Lys-Gly) (interchain with G-Cter in ubiquitin) cross-links involve residues Lys65, Lys76, Lys110, Lys112, Lys152, Lys175, Lys181, Lys187, and Lys193. The segment at 211–230 (RVPRKQPISVRREEVTEPGG) is disordered. Residues Lys256 and Lys267 each participate in a glycyl lysine isopeptide (Lys-Gly) (interchain with G-Cter in ubiquitin) cross-link. The disordered stretch occupies residues 268 to 291 (EGSWEKPNDDSFQNSGAQSSPETS). Residues 277–290 (DSFQNSGAQSSPET) are compositionally biased toward polar residues. Ser278 is modified (phosphoserine). Residues 353–412 (TVHVGDIVAAPLSTNGSWYRARVLGTLENGNLDLYFVDFGDNGDCALKDLRALRSDFLSL) form the Tudor domain. Residues Lys479, Lys510, and Lys529 each participate in a glycyl lysine isopeptide (Lys-Gly) (interchain with G-Cter in ubiquitin) cross-link.

It belongs to the Tdrkh family. Interacts with (symmetrically methylated) PIWIL1, PIWIL2 and PIWIL4. Ubiquitinated by PRKN during mitophagy, leading to its degradation and enhancement of mitophagy. Deubiquitinated by USP30. As to expression, highly expressed in testis, present at lower level in brain. Weakly or not expressed in other tissues (at protein level).

Its subcellular location is the cytoplasm. The protein localises to the mitochondrion. Functionally, participates in the primary piRNA biogenesis pathway and is required during spermatogenesis to repress transposable elements and prevent their mobilization, which is essential for the germline integrity. The piRNA metabolic process mediates the repression of transposable elements during meiosis by forming complexes composed of piRNAs and Piwi proteins and govern the methylation and subsequent repression of transposons. Required for the final steps of primary piRNA biogenesis by participating in the processing of 31-37 nt intermediates into mature piRNAs. May act in pi-bodies and piP-bodies by transferring piRNA precursors or intermediates to or between these granules. This Mus musculus (Mouse) protein is Tudor and KH domain-containing protein (Tdrkh).